Reading from the N-terminus, the 415-residue chain is Lipoyl synthase, apicoplast (415 aa).

The first 23 residues, methionine 1–cysteine 23, serve as a signal peptide directing secretion. Residues cysteine 153, cysteine 158, cysteine 164, cysteine 179, cysteine 183, cysteine 186, and serine 394 each contribute to the [4Fe-4S] cluster site. Positions tryptophan 165–lysine 383 constitute a Radical SAM core domain.

It belongs to the radical SAM superfamily. Lipoyl synthase family. [4Fe-4S] cluster is required as a cofactor.

The protein localises to the plastid. It is found in the apicoplast. The catalysed reaction is [[Fe-S] cluster scaffold protein carrying a second [4Fe-4S](2+) cluster] + N(6)-octanoyl-L-lysyl-[protein] + 2 oxidized [2Fe-2S]-[ferredoxin] + 2 S-adenosyl-L-methionine + 4 H(+) = [[Fe-S] cluster scaffold protein] + N(6)-[(R)-dihydrolipoyl]-L-lysyl-[protein] + 4 Fe(3+) + 2 hydrogen sulfide + 2 5'-deoxyadenosine + 2 L-methionine + 2 reduced [2Fe-2S]-[ferredoxin]. Its pathway is protein modification; protein lipoylation via endogenous pathway; protein N(6)-(lipoyl)lysine from octanoyl-[acyl-carrier-protein]: step 2/2. Its function is as follows. Catalyzes the radical-mediated insertion of two sulfur atoms into the C-6 and C-8 positions of the octanoyl moiety bound to the lipoyl domains of lipoate-dependent enzymes, thereby converting the octanoylated domains into lipoylated derivatives. In Plasmodium falciparum (isolate 3D7), this protein is Lipoyl synthase, apicoplast.